We begin with the raw amino-acid sequence, 148 residues long: Large ribosomal subunit protein uL15 (148 aa).

The segment covering 1-12 (MSDPIKLHDLRP) has biased composition (basic and acidic residues). The disordered stretch occupies residues 1–45 (MSDPIKLHDLRPAKGANKAKTRVGRGEASKGKTAGRGTKGTKARN).

It belongs to the universal ribosomal protein uL15 family. Part of the 50S ribosomal subunit.

Its function is as follows. Binds to the 23S rRNA. In Corynebacterium urealyticum (strain ATCC 43042 / DSM 7109), this protein is Large ribosomal subunit protein uL15.